The chain runs to 89 residues: cAMP-regulated phosphoprotein 21 (89 aa).

The disordered stretch occupies residues 1–89; that stretch reads MSEQGDLNQA…GGESLQDQTL (89 aa). Ser-2 carries the N-acetylserine modification. Over residues 9-25 the composition is skewed to low complexity; it reads QAIAEEGGTEQETATPE. Ser-33 bears the Phosphoserine mark. Residues 40–53 show a composition bias toward basic and acidic residues; the sequence is LELQRRLEAQNQER. Ser-56 is subject to Phosphoserine.

As to quaternary structure, interacts with CALM1. Post-translationally, phosphorylation at Ser-56 favors interaction with CALM1.

It localises to the cytoplasm. May act as a competitive inhibitor of calmodulin-dependent enzymes such as calcineurin in neurons. This is cAMP-regulated phosphoprotein 21 (ARPP21) from Pongo abelii (Sumatran orangutan).